Reading from the N-terminus, the 104-residue chain is MLFKPKTRAIPSPTARTLPVSFKLASSDTPLILSSKMEETSVGCALVEANLLVEAKAAAAGLAALVELIRVLDRERIAAVRANIIICACFFYLFCYCSCDSYES.

The chain crosses the membrane as a helical span at residues 77-98 (IAAVRANIIICACFFYLFCYCS).

It localises to the membrane. This is an uncharacterized protein from Saccharomyces cerevisiae (strain ATCC 204508 / S288c) (Baker's yeast).